Reading from the N-terminus, the 113-residue chain is Small ribosomal subunit protein uS17 (113 aa).

This sequence belongs to the universal ribosomal protein uS17 family. Part of the 30S ribosomal subunit.

Its function is as follows. One of the primary rRNA binding proteins, it binds specifically to the 5'-end of 16S ribosomal RNA. In Pyrococcus furiosus (strain ATCC 43587 / DSM 3638 / JCM 8422 / Vc1), this protein is Small ribosomal subunit protein uS17.